The chain runs to 147 residues: D-aminoacyl-tRNA deacylase (147 aa).

A Gly-cisPro motif, important for rejection of L-amino acids motif is present at residues 137-138 (GP).

This sequence belongs to the DTD family. Homodimer.

The protein localises to the cytoplasm. It carries out the reaction glycyl-tRNA(Ala) + H2O = tRNA(Ala) + glycine + H(+). The enzyme catalyses a D-aminoacyl-tRNA + H2O = a tRNA + a D-alpha-amino acid + H(+). Functionally, an aminoacyl-tRNA editing enzyme that deacylates mischarged D-aminoacyl-tRNAs. Also deacylates mischarged glycyl-tRNA(Ala), protecting cells against glycine mischarging by AlaRS. Acts via tRNA-based rather than protein-based catalysis; rejects L-amino acids rather than detecting D-amino acids in the active site. By recycling D-aminoacyl-tRNA to D-amino acids and free tRNA molecules, this enzyme counteracts the toxicity associated with the formation of D-aminoacyl-tRNA entities in vivo and helps enforce protein L-homochirality. The protein is D-aminoacyl-tRNA deacylase of Bacillus pumilus (strain SAFR-032).